The chain runs to 332 residues: Isopentenyl-diphosphate delta-isomerase (332 aa).

Arginine 6–lysine 7 provides a ligand contact to substrate. FMN-binding positions include alanine 65–threonine 67, serine 95, and asparagine 123. Serine 95–arginine 97 is a substrate binding site. Substrate is bound at residue glutamine 157. Glutamate 158 contacts Mg(2+). FMN contacts are provided by residues lysine 187, threonine 217, glycine 264–tyrosine 266, alanine 285, and alanine 285–arginine 286.

The protein belongs to the IPP isomerase type 2 family. In terms of assembly, homooctamer. Dimer of tetramers. Requires FMN as cofactor. It depends on NADPH as a cofactor. Mg(2+) is required as a cofactor.

It is found in the cytoplasm. The catalysed reaction is isopentenyl diphosphate = dimethylallyl diphosphate. With respect to regulation, competitively inhibited by N,N-dimethyl-2-amino-1-ethyl diphosphate (NIPP) and isopentyl diphosphate. Functionally, involved in the biosynthesis of isoprenoids. Catalyzes the 1,3-allylic rearrangement of the homoallylic substrate isopentenyl (IPP) to its allylic isomer, dimethylallyl diphosphate (DMAPP). The chain is Isopentenyl-diphosphate delta-isomerase from Thermus thermophilus (strain ATCC BAA-163 / DSM 7039 / HB27).